A 224-amino-acid polypeptide reads, in one-letter code: Uracil phosphoribosyltransferase (224 aa).

38–42 (KGLVK) is a binding site for GTP. 5-phospho-alpha-D-ribose 1-diphosphate is bound by residues Arg-87, Arg-112, and 140 to 148 (DPMIATGST). Uracil is bound by residues Ile-204 and 209–211 (GDA). Position 210 (Asp-210) interacts with 5-phospho-alpha-D-ribose 1-diphosphate.

Belongs to the UPRTase family. Mg(2+) is required as a cofactor.

It catalyses the reaction UMP + diphosphate = 5-phospho-alpha-D-ribose 1-diphosphate + uracil. It participates in pyrimidine metabolism; UMP biosynthesis via salvage pathway; UMP from uracil: step 1/1. Its activity is regulated as follows. Allosterically activated by GTP. Functionally, catalyzes the conversion of uracil and 5-phospho-alpha-D-ribose 1-diphosphate (PRPP) to UMP and diphosphate. The sequence is that of Uracil phosphoribosyltransferase from Thermococcus gammatolerans (strain DSM 15229 / JCM 11827 / EJ3).